We begin with the raw amino-acid sequence, 130 residues long: MAAEQYYGTGRRKTATARVFISVGTGKVTINDRPLDEYFGREVARMIVCQPLEATDNVEKFDIKATVKGGGSFGQAGAIRHGLTRALMAYDEAMRSTLRAAGYVTRDAREVERKKVGLRKARKKPQFSKR.

Belongs to the universal ribosomal protein uS9 family.

The sequence is that of Small ribosomal subunit protein uS9 from Teredinibacter turnerae (strain ATCC 39867 / T7901).